The chain runs to 240 residues: Probable transcriptional regulatory protein Nmul_A2722 (240 aa).

It belongs to the TACO1 family.

It is found in the cytoplasm. In Nitrosospira multiformis (strain ATCC 25196 / NCIMB 11849 / C 71), this protein is Probable transcriptional regulatory protein Nmul_A2722.